Consider the following 1391-residue polypeptide: MSMLKPSGLKAPTKILKPGSTALKTPAAAAAPVEKTIPSEKASGPPSSETQEEFVDDFRVGERVWVNGNKPGFIQFLGETQFAPGQWAGIVLDEPIGKNDGSVAGVRYFQCEPLKGIFTRPSKLTRKVQAEDEANGLQAAPGRTASPLSTAAATMVSSSPATPSNIPHKPSQSTAKEPSATPQISNLTKTASESISNLSEAGSVKKGERELKVGDRVLVGGTKAGVVRFLGETDFAKGEWCGVELDEPLGKNDGAVAGTRYFQCQPKYGLFAPVHKVTKIGFPSTTPAKAKAAAVRRVMAATPASLKRSPSASSLSSMSSVASSVSSKPSRTGLLTETSSRYARKISGTTALQEALKEKQQHIEQLLAERDLERAEVAKATSHVGEIEQELALARDGHDQHVLELEAKMDQLRTMVEAADREKVELLNQLEEEKRKVEDLQFRVEEESITKGDLEVATVSEKSRIMELEKDLALRAQEVAELRRRLESSKPPGDVDMSLSLLQEISALQEKLEAIHTDHQGEMTSLKEHFGAREEAFQKEIKALHTATEKLSKENESLRSKLDHANKENSDVIALWKSKLETAIASHQQAMEELKVSFSKGIGTDSAEFAELKTQIERLRLDYQHEIESLQSKQDSERSAHAKEMETMQAKLMKIIKEKEDSLEAVKARLDSAEDQHLVEMEDTLNKLQEAEIKVKELEVLQAKYTEQSEVIGNFTSQLSAVKEKLLDLDALRKANSEGKLELETLRQQLEGAEKQIKNLETERNAESSKANSITKELQEKELVLTGLQDSLNQVNQVKETLEKELQTLKEKFASTSEEAVSAQTRMQDTVNKLHQKEEQFNVLSSELEKLRENLTDMEAKFKEKDDREDQLVKAKEKLENDIAEIMKMSGDNSSQLTKMNDELRLKERSVEELQLKLTKANENASFLQKSIGEVTLKAEQSQQQAARKHEEEKKELEEKLLELEKKMETSYNQCQDLKAKYEKASSETKTKHEEILQNLQKMLADTEDKLKAAQEANRDLMQDMEELKTQADKAKAAQTAEDAMQIMEQMTKEKTETLASLEDTKQTNARLQNELDTLKENNLKTVEELNKSKELLSVENQKMEEFKKEIETLKQAAAQKSQQLSALQEENVKLAEELGRTRDEVTSHQKLEEERSVLNNQLLEMKKRESEFRKDADEEKASLQKSISLTSALLTEKDAELEKLRNEVTVLRGENATAKSLHSVVQTLESDKVKLELKVKNLELQLKENKRQLSSSSGNTDAQAEEDERAQESQIDFLNSVIVDLQRKNQDLKMKVEMMSEAALNGNGEDLNSYDSDDQEKQSKKKPRLFCDICDCFDLHDTEDCPTQAQMSEDPPHSTHHGSRSEERPYCEICEMFGHWATNCNDDETF.

A disordered region spans residues 1 to 53 (MSMLKPSGLKAPTKILKPGSTALKTPAAAAAPVEKTIPSEKASGPPSSETQEE). Residue S48 is modified to Phosphoserine. The residue at position 50 (T50) is a Phosphothreonine. The region spanning 78–120 (GETQFAPGQWAGIVLDEPIGKNDGSVAGVRYFQCEPLKGIFTR) is the CAP-Gly 1 domain. The segment at 97 to 101 (GKNDG) is important for tubulin binding. Residues 129–182 (QAEDEANGLQAAPGRTASPLSTAAATMVSSSPATPSNIPHKPSQSTAKEPSATP) form a disordered region. Position 146 is a phosphoserine (S146). Residues 146-182 (SPLSTAAATMVSSSPATPSNIPHKPSQSTAKEPSATP) show a composition bias toward polar residues. T181 bears the Phosphothreonine mark. A phosphoserine mark is found at S194, S196, S199, and S203. A CAP-Gly 2 domain is found at 231–273 (GETDFAKGEWCGVELDEPLGKNDGAVAGTRYFQCQPKYGLFAP). Residues 302–331 (TPASLKRSPSASSLSSMSSVASSVSSKPSR) are compositionally biased toward low complexity. The tract at residues 302-336 (TPASLKRSPSASSLSSMSSVASSVSSKPSRTGLLT) is disordered. S309 carries the phosphoserine modification. The residue at position 311 (S311) is a Phosphoserine; by PKA. S314, S347, and S1189 each carry phosphoserine. A coiled-coil region spans residues 349–1306 (TTALQEALKE…VEMMSEAALN (958 aa)). The tract at residues 1251–1272 (KRQLSSSSGNTDAQAEEDERAQ) is disordered. S1317 carries the phosphoserine modification. The CCHC-type zinc-finger motif lies at 1370 to 1387 (PYCEICEMFGHWATNCND).

As to quaternary structure, interacts with MTOR; phosphorylates and regulates CLIP1. Interacts (via CAP-Gly domains) with tubulin. Interacts with SLAIN2. Interacts with TUBA1B, MAPRE1 and MAPRE3. Interacts (via zinc finger) with DCTN1. Binds preferentially to tyrosinated microtubules, and only marginally to detyrosinated microtubules. In terms of processing, phosphorylated. Phosphorylation induces conformational changes by increasing the affinity of the N-terminus for C-terminus, resulting in inhibition of its function thus decreasing its binding to microtubules and DCTN1. Exhibits a folded, autoinhibited conformation when phosphorylated and an open conformation when dephosphorylated with increased binding affinity to microtubules and DCTN1. Phosphorylation regulates its recruitment to tyrosinated microtubules and the recruitment of vesicular cargo to microtubules in neurons. Phosphorylation by MTOR may positively regulate CLIP1 association with microtubules. In terms of tissue distribution, expressed in the testes (at protein level).

The protein localises to the cytoplasm. Its subcellular location is the cytoskeleton. It is found in the cytoplasmic vesicle membrane. It localises to the cell projection. The protein resides in the ruffle. In terms of biological role, binds to the plus end of microtubules and regulates the dynamics of the microtubule cytoskeleton. Promotes microtubule growth and microtubule bundling. Links cytoplasmic vesicles to microtubules and thereby plays an important role in intracellular vesicle trafficking. Plays a role macropinocytosis and endosome trafficking. This Mus musculus (Mouse) protein is CAP-Gly domain-containing linker protein 1 (Clip1).